Reading from the N-terminus, the 133-residue chain is UPF0768 protein C977.18 (133 aa).

This sequence belongs to the UPF0768 family.

This Schizosaccharomyces pombe (strain 972 / ATCC 24843) (Fission yeast) protein is UPF0768 protein C977.18.